Here is a 172-residue protein sequence, read N- to C-terminus: Zinc finger C2HC domain-containing protein 1B (172 aa).

2 consecutive C2HC/C3H-type zinc fingers follow at residues 14–43 and 117–146; these read KLFPCEVCGRCFATDVLERHGPICKKVFNK and DYIQCPYCMRRFNETAAQRHINFCKNQTSR. Residues cysteine 18, cysteine 21, histidine 33, cysteine 37, cysteine 121, cysteine 124, histidine 136, and cysteine 140 each coordinate Zn(2+).

This sequence belongs to the ZC2HC1 family. It depends on Zn(2+) as a cofactor.

This chain is Zinc finger C2HC domain-containing protein 1B (Zc2hc1b), found in Mus musculus (Mouse).